The primary structure comprises 503 residues: Lanosterol 14-alpha demethylase (503 aa).

A helical transmembrane segment spans residues 24–44; it reads GNLLSTLLIACAFTLSLVYLF. Position 449 (Cys-449) interacts with heme.

It belongs to the cytochrome P450 family. Heme is required as a cofactor. Ubiquitinated by MARCHF6, leading to proteasomal degradation.

The protein localises to the endoplasmic reticulum membrane. Its subcellular location is the microsome membrane. The enzyme catalyses a 14alpha-methyl steroid + 3 reduced [NADPH--hemoprotein reductase] + 3 O2 = a Delta(14) steroid + formate + 3 oxidized [NADPH--hemoprotein reductase] + 4 H2O + 4 H(+). It carries out the reaction lanosterol + 3 reduced [NADPH--hemoprotein reductase] + 3 O2 = 4,4-dimethyl-5alpha-cholesta-8,14,24-trien-3beta-ol + formate + 3 oxidized [NADPH--hemoprotein reductase] + 4 H2O + 4 H(+). It catalyses the reaction 24,25-dihydrolanosterol + 3 reduced [NADPH--hemoprotein reductase] + 3 O2 = 4,4-dimethyl-8,14-cholestadien-3beta-ol + formate + 3 oxidized [NADPH--hemoprotein reductase] + 4 H2O + 4 H(+). The catalysed reaction is a 14alpha-methyl steroid + reduced [NADPH--hemoprotein reductase] + O2 = a 14alpha-hydroxymethyl steroid + oxidized [NADPH--hemoprotein reductase] + H2O + H(+). The enzyme catalyses a 14alpha-hydroxymethyl steroid + reduced [NADPH--hemoprotein reductase] + O2 = a 14alpha-formyl steroid + oxidized [NADPH--hemoprotein reductase] + 2 H2O + H(+). It carries out the reaction a 14alpha-formyl steroid + reduced [NADPH--hemoprotein reductase] + O2 = a Delta(14) steroid + formate + oxidized [NADPH--hemoprotein reductase] + H2O + 2 H(+). It catalyses the reaction lanosterol + reduced [NADPH--hemoprotein reductase] + O2 = 32-hydroxylanosterol + oxidized [NADPH--hemoprotein reductase] + H2O + H(+). The catalysed reaction is 32-hydroxylanosterol + reduced [NADPH--hemoprotein reductase] + O2 = 32-oxolanosterol + oxidized [NADPH--hemoprotein reductase] + 2 H2O + H(+). The enzyme catalyses 32-oxolanosterol + reduced [NADPH--hemoprotein reductase] + O2 = 4,4-dimethyl-5alpha-cholesta-8,14,24-trien-3beta-ol + formate + oxidized [NADPH--hemoprotein reductase] + H2O + 2 H(+). It carries out the reaction 24,25-dihydrolanosterol + reduced [NADPH--hemoprotein reductase] + O2 = 32-hydroxy-24,25-dihydrolanosterol + oxidized [NADPH--hemoprotein reductase] + H2O + H(+). It catalyses the reaction 32-hydroxy-24,25-dihydrolanosterol + reduced [NADPH--hemoprotein reductase] + O2 = 32-oxo-24,25-dihydrolanosterol + oxidized [NADPH--hemoprotein reductase] + 2 H2O + H(+). The catalysed reaction is 32-oxo-24,25-dihydrolanosterol + reduced [NADPH--hemoprotein reductase] + O2 = 4,4-dimethyl-8,14-cholestadien-3beta-ol + formate + oxidized [NADPH--hemoprotein reductase] + H2O + 2 H(+). The protein operates within steroid biosynthesis; zymosterol biosynthesis; zymosterol from lanosterol: step 1/6. Inhibited by azalanstat. Inhibited by azole antifungal agents ketoconazole, itraconazole and fluconazole. Sterol 14alpha-demethylase that plays a critical role in the cholesterol biosynthesis pathway, being cholesterol the major sterol component in mammalian membranes as well as a precursor for bile acid and steroid hormone synthesis. Cytochrome P450 monooxygenase that catalyzes the three-step oxidative removal of the 14alpha-methyl group (C-32) of sterols such as lanosterol (lanosta-8,24-dien-3beta-ol) and 24,25-dihydrolanosterol (DHL) in the form of formate, and converts the sterols to 4,4-dimethyl-5alpha-cholesta-8,14,24-trien-3beta-ol and 4,4-dimethyl-8,14-cholestadien-3beta-ol, respectively, which are intermediates of cholesterol biosynthesis. Can also demethylate substrates not intrinsic to mammals, such as eburicol (24-methylene-24,25-dihydrolanosterol), but at a lower rate than DHL. The chain is Lanosterol 14-alpha demethylase from Mus musculus (Mouse).